Reading from the N-terminus, the 238-residue chain is Orotidine 5'-phosphate decarboxylase (238 aa).

Substrate contacts are provided by residues aspartate 18, lysine 40, 67–76, threonine 122, arginine 183, glutamine 192, and arginine 213; that span reads DMKLLDIDNT. Lysine 69 functions as the Proton donor in the catalytic mechanism.

The protein belongs to the OMP decarboxylase family. Type 1 subfamily. Homodimer.

It catalyses the reaction orotidine 5'-phosphate + H(+) = UMP + CO2. The protein operates within pyrimidine metabolism; UMP biosynthesis via de novo pathway; UMP from orotate: step 2/2. In terms of biological role, catalyzes the decarboxylation of orotidine 5'-monophosphate (OMP) to uridine 5'-monophosphate (UMP). In Brucella melitensis biotype 2 (strain ATCC 23457), this protein is Orotidine 5'-phosphate decarboxylase.